Reading from the N-terminus, the 596-residue chain is Elongation factor 4 (596 aa).

The tr-type G domain occupies 2-183 (KNIRNFSIIA…EIIRRIPAPN (182 aa)). Residues 14-19 (DHGKST) and 130-133 (NKID) each bind GTP.

Belongs to the TRAFAC class translation factor GTPase superfamily. Classic translation factor GTPase family. LepA subfamily.

The protein resides in the cell inner membrane. The catalysed reaction is GTP + H2O = GDP + phosphate + H(+). Required for accurate and efficient protein synthesis under certain stress conditions. May act as a fidelity factor of the translation reaction, by catalyzing a one-codon backward translocation of tRNAs on improperly translocated ribosomes. Back-translocation proceeds from a post-translocation (POST) complex to a pre-translocation (PRE) complex, thus giving elongation factor G a second chance to translocate the tRNAs correctly. Binds to ribosomes in a GTP-dependent manner. In Wolinella succinogenes (strain ATCC 29543 / DSM 1740 / CCUG 13145 / JCM 31913 / LMG 7466 / NCTC 11488 / FDC 602W) (Vibrio succinogenes), this protein is Elongation factor 4.